The chain runs to 515 residues: Nectin-1 (515 aa).

Positions 1-30 (MARMGLAGAAGRWWGLALGLTAFFLPGTHT) are cleaved as a signal peptide. Residues 31-141 (QVVQVNDSMY…GNRESQLNLT (111 aa)) enclose the Ig-like V-type domain. Topologically, residues 31–354 (QVVQVNDSMY…GRRAGQMPTA (324 aa)) are extracellular. N-linked (GlcNAc...) asparagine glycosylation is found at Asn-36, Asn-72, Asn-139, Asn-202, Asn-286, Asn-297, and Asn-332. A disulfide bridge links Cys-51 with Cys-124. Ig-like C2-type domains follow at residues 145-243 (KPTN…TLNV) and 247-334 (PEVT…VNIT). 2 disulfides stabilise this stretch: Cys-172–Cys-226 and Cys-269–Cys-316. Residues 282-299 (WTTLNGSLPKGVEAQNRT) form an interaction with FGFR region. A helical membrane pass occupies residues 355 to 375 (IIGGVAGSVLLVLIVVGGIIV). Residues 376 to 515 (ALRRRRHTFK…SFISKKEWYV (140 aa)) are Cytoplasmic-facing. Residues 399–486 (YSKAGIPQHH…DGYGDRTLGY (88 aa)) are disordered. 3 positions are modified to phosphoserine: Ser-421, Ser-433, and Ser-434. Tyr-435 bears the Phosphotyrosine mark. Basic and acidic residues predominate over residues 447–464 (GERKVGGPHPKYDEDAKR). A Phosphoserine modification is found at Ser-509.

Belongs to the nectin family. In terms of assembly, cis- and trans-homodimer. Can form trans-heterodimers with NECTIN3 and with NECTIN4. Interaction between NECTIN1 and NECTIN3 on the pre- and postsynaptic sites, respectively, initiates the formation of puncta adherentia junctions between axons and dendrites. Interacts (via cytoplasmic domain) with AFDN (via PDZ domain); this interaction recruits NECTIN1 to cadherin-based adherens junctions and provides a connection with the actin cytoskeleton. Interacts with integrin alphaV/beta3. Interacts (via Ig-like C2-type domain 2) with FGFR1, FGFR2 and FGFR3. (Microbial infection) Interacts with herpes pseudorabies virus/PRV envelope glycoprotein D.

It is found in the cell membrane. Its subcellular location is the cell junction. It localises to the adherens junction. The protein localises to the presynaptic cell membrane. In terms of biological role, cell adhesion molecule that promotes cell-cell contacts and plays important roles in the development of the nervous system. Acts by forming homophilic or heterophilic trans-dimers. Heterophilic interactions have been detected between NECTIN1 and NECTIN3 and between NECTIN1 and NECTIN4. Involved in axon guidance by promoting contacts between the commissural axons and the floor plate cells. Involved in synaptogegesis. Has some neurite outgrowth-promoting activity. Promotes formation of checkerboard-like cellular pattern of hair cells and supporting cells in the auditory epithelium via heterophilic interaction with NECTIN3: NECTIN1 is present in the membrane of hair cells and associates with NECTIN3 on supporting cells, thereby mediating heterotypic adhesion between these two cell types. Required for enamel mineralization. (Microbial infection) Acts as a receptor for pseudorabies virus/PRV. This Mus musculus (Mouse) protein is Nectin-1.